The chain runs to 928 residues: MAKVPELEDTFLQAQPAPQLSPGIQEDCCVQLLGKGLLVYPEETVYLAAEGQPGGEQGGGEKGEDPELPGAVKSEMHLNNGNFSSEEEDADNHDSKTKAADQYLSQKKTITQIVKDKKKQTQLTLQWLEENYIVCEGVCLPRCILYAHYLDFCRKEKLEPACAATFGKTIRQKFPLLTTRRLGTRGHSKYHYYGIGIKESSAYYHSVYSGKGLTRFSGSKLKNEGGFTRKYSLSSKTGTLLPEFPSAQHLVYQGCISKDKVDTLIMMYKTHCQCILDNAINGNFEEIQHFLLHFWQGMPDHLLPLLENPVIIDIFCVCDSILYKVLTDVLIPATMQEMPESLLADIRNFAKNWEQWVVSSLENLPEALTDKKIPIVRRFVSSLKRQTSFLHLAQIARPALFDQHVVNSMVSDIERVDLNSIGSQALLTISGSTDTESGIYTEHDSITVFQELKDLLKKNATVEAFIEWLDTVVEQRVIKTSKQNGRSLKKRAQDFLLKWSFFGARVMHNLTLNNASSFGSFHLIRMLLDEYILLAMETQFNNDKEQELQNLLDKYMKNSDASKAAFTASPSSCFLANRNKGSMVSSDAVKNESHVETTYLPLPSSQPGGLGPALHQFPAGNTDNMPLTGQMELSQIAGHLMTPPISPAMASRGSVINQGPMAGRPPSVGPVLSAPSHCSTYPEPIYPTLPQANHDFYSTSSNYQTVFRAQPHSTSGLYPHHTEHGRCMAWTEQQLSRDFFSGSCAGSPYNSRPPSSYGPSLQAQDSHNMQFLNTGSFNFLSNTGAASCQGATLPPNSPNGYYGSNINYPESHRLGSMVNQHVSVISSIRSLPPYSDIHDPLNILDDSGRKQTSSFYTDTSSPVACRTPVLASSLQTPIPSSSSQCMYGTSNQYPAQETLDSHGTSSREMVSSLPPINTVFMGTAAGGT.

Disordered regions lie at residues 1–20 (MAKV…APQL) and 50–98 (EGQP…SKTK). Residues 124–199 (TLQWLEENYI…YHYYGIGIKE (76 aa)) constitute a DNA-binding region (RFX-type winged-helix).

This sequence belongs to the RFX family. As to quaternary structure, interacts with RFX3. Expressed in pancreas. Expressed in pancreatic beta-cells (insulin-positive cells) and alpha-cells (glucagon-positive cells) (at protein level). Specifically expressed in pancreas, small intestine and colon. Expressed in endocrine cells in the islets.

The protein localises to the nucleus. Functionally, transcription factor required to direct islet cell differentiation during endocrine pancreas development. Specifically required for the differentiation of 4 of the 5 islet cell types and for the production of insulin. Not required for pancreatic PP (polypeptide-producing) cells differentiation. Acts downstream of NEUROG3 and regulates the transcription factors involved in beta-cell maturation and function, thereby restricting the expression of the beta-cell differentiation and specification genes, and thus the beta-cell fate choice. Activates transcription by forming a heterodimer with RFX3 and binding to the X-box in the promoter of target genes. Involved in glucose-stimulated insulin secretion by promoting insulin and L-type calcium channel gene transcription. This chain is DNA-binding protein RFX6 (RFX6), found in Homo sapiens (Human).